A 363-amino-acid polypeptide reads, in one-letter code: Cytoskeleton protein RodZ (363 aa).

The Cytoplasmic segment spans residues 1 to 111 (MNTEASQDQT…LGKKHKKRDG (111 aa)). The HTH cro/C1-type domain maps to 19–79 (LRQARESLGL…KLVHLPEDEL (61 aa)). Positions 30–49 (QQTVAERLCLKVSTIRDIEE) form a DNA-binding region, H-T-H motif. A helical; Signal-anchor for type II membrane protein transmembrane segment spans residues 112-132 (WLMSFTWLIVLVVLGLTGAWW). The Periplasmic portion of the chain corresponds to 133–363 (WQNHQAQQAE…RVARLTVGVE (231 aa)). The tract at residues 151–277 (SAQLSQNGGQ…PLPTADAGVS (127 aa)) is disordered. Polar residues predominate over residues 188–199 (PLTNHSVSAITN). Positions 200–225 (SAPTTSSVPTTSSATTSSVPTTSSVP) are enriched in low complexity. The segment covering 226–243 (KINSTEPVDTANTNTTMH) has biased composition (polar residues). Positions 247 to 259 (AASAAVSPSQVPQ) are enriched in low complexity.

The protein belongs to the RodZ family.

It is found in the cell inner membrane. Cytoskeletal protein that is involved in cell-shape control through regulation of the length of the long axis. In Yersinia pseudotuberculosis serotype O:1b (strain IP 31758), this protein is Cytoskeleton protein RodZ.